Here is a 155-residue protein sequence, read N- to C-terminus: Ubiquinone biosynthesis protein COQ4 homolog, mitochondrial (155 aa).

Belongs to the COQ4 family. As to quaternary structure, component of a multi-subunit COQ enzyme complex. Requires Zn(2+) as cofactor.

It localises to the mitochondrion inner membrane. It carries out the reaction a 4-hydroxy-3-methoxy-5-(all-trans-polyprenyl)benzoate + H(+) = a 2-methoxy-6-(all-trans-polyprenyl)phenol + CO2. The protein operates within cofactor biosynthesis; ubiquinone biosynthesis. Lyase that catalyzes the C1-decarboxylation of 4-hydroxy-3-methoxy-5-(all-trans-polyprenyl)benzoic acid into 2-methoxy-6-(all-trans-polyprenyl)phenol during ubiquinone biosynthesis. This chain is Ubiquinone biosynthesis protein COQ4 homolog, mitochondrial, found in Cryptosporidium hominis.